The primary structure comprises 320 residues: 4-hydroxy-3-methylbut-2-enyl diphosphate reductase (320 aa).

Cys-12 contacts [4Fe-4S] cluster. Residues His-41 and His-74 each contribute to the (2E)-4-hydroxy-3-methylbut-2-enyl diphosphate site. 2 residues coordinate dimethylallyl diphosphate: His-41 and His-74. Isopentenyl diphosphate is bound by residues His-41 and His-74. Cys-96 is a [4Fe-4S] cluster binding site. His-124 contacts (2E)-4-hydroxy-3-methylbut-2-enyl diphosphate. His-124 contributes to the dimethylallyl diphosphate binding site. His-124 serves as a coordination point for isopentenyl diphosphate. The Proton donor role is filled by Glu-126. Thr-167 serves as a coordination point for (2E)-4-hydroxy-3-methylbut-2-enyl diphosphate. Cys-197 contacts [4Fe-4S] cluster. Ser-225, Ser-226, Asn-227, and Ser-269 together coordinate (2E)-4-hydroxy-3-methylbut-2-enyl diphosphate. Positions 225, 226, 227, and 269 each coordinate dimethylallyl diphosphate. 4 residues coordinate isopentenyl diphosphate: Ser-225, Ser-226, Asn-227, and Ser-269.

This sequence belongs to the IspH family. [4Fe-4S] cluster is required as a cofactor.

The catalysed reaction is isopentenyl diphosphate + 2 oxidized [2Fe-2S]-[ferredoxin] + H2O = (2E)-4-hydroxy-3-methylbut-2-enyl diphosphate + 2 reduced [2Fe-2S]-[ferredoxin] + 2 H(+). The enzyme catalyses dimethylallyl diphosphate + 2 oxidized [2Fe-2S]-[ferredoxin] + H2O = (2E)-4-hydroxy-3-methylbut-2-enyl diphosphate + 2 reduced [2Fe-2S]-[ferredoxin] + 2 H(+). Its pathway is isoprenoid biosynthesis; dimethylallyl diphosphate biosynthesis; dimethylallyl diphosphate from (2E)-4-hydroxy-3-methylbutenyl diphosphate: step 1/1. It participates in isoprenoid biosynthesis; isopentenyl diphosphate biosynthesis via DXP pathway; isopentenyl diphosphate from 1-deoxy-D-xylulose 5-phosphate: step 6/6. Functionally, catalyzes the conversion of 1-hydroxy-2-methyl-2-(E)-butenyl 4-diphosphate (HMBPP) into a mixture of isopentenyl diphosphate (IPP) and dimethylallyl diphosphate (DMAPP). Acts in the terminal step of the DOXP/MEP pathway for isoprenoid precursor biosynthesis. The protein is 4-hydroxy-3-methylbut-2-enyl diphosphate reductase of Francisella tularensis subsp. novicida (strain U112).